The chain runs to 119 residues: Ribosome-binding factor A (119 aa).

This sequence belongs to the RbfA family. Monomer. Binds 30S ribosomal subunits, but not 50S ribosomal subunits or 70S ribosomes.

It localises to the cytoplasm. One of several proteins that assist in the late maturation steps of the functional core of the 30S ribosomal subunit. Associates with free 30S ribosomal subunits (but not with 30S subunits that are part of 70S ribosomes or polysomes). Required for efficient processing of 16S rRNA. May interact with the 5'-terminal helix region of 16S rRNA. The protein is Ribosome-binding factor A of Pelodictyon phaeoclathratiforme (strain DSM 5477 / BU-1).